The primary structure comprises 263 residues: Aquaglyceroporin (263 aa).

The tract at residues 1–22 (MDQFVFSGGSEGGGELGGDRER) is disordered. A run of 6 helical transmembrane segments spans residues 41 to 61 (KYFC…FGLA), 64 to 84 (GGAQ…ITLF), 113 to 133 (LCYV…GYGI), 157 to 177 (VIPT…YGVM), 180 to 200 (LTVP…GATM), and 222 to 242 (VAAL…AFLG).

The protein belongs to the MIP/aquaporin (TC 1.A.8) family. As to quaternary structure, multimer.

It localises to the vacuole membrane. The enzyme catalyses H2O(in) = H2O(out). It carries out the reaction glycerol(in) = glycerol(out). It catalyses the reaction urea(in) = urea(out). Its function is as follows. Mediates water and glycerol transport across cell membranes. Permeable to selected sugar alcohols of up to five carbons and urea. Permeable to methylamine/methylammonium. This chain is Aquaglyceroporin, found in Toxoplasma gondii (strain ATCC 50611 / Me49).